The sequence spans 448 residues: N-succinylarginine dihydrolase (448 aa).

Substrate is bound by residues Ala19 to Ser28, Asn110, and His137 to Arg138. The active site involves Glu174. Residue Arg214 coordinates substrate. Residue His250 is part of the active site. 2 residues coordinate substrate: Asp252 and Asn364. Cys370 serves as the catalytic Nucleophile.

Belongs to the succinylarginine dihydrolase family. As to quaternary structure, homodimer.

It carries out the reaction N(2)-succinyl-L-arginine + 2 H2O + 2 H(+) = N(2)-succinyl-L-ornithine + 2 NH4(+) + CO2. It functions in the pathway amino-acid degradation; L-arginine degradation via AST pathway; L-glutamate and succinate from L-arginine: step 2/5. Functionally, catalyzes the hydrolysis of N(2)-succinylarginine into N(2)-succinylornithine, ammonia and CO(2). This is N-succinylarginine dihydrolase from Pseudoalteromonas translucida (strain TAC 125).